The chain runs to 62 residues: Large ribosomal subunit protein bL35 (62 aa).

Basic residues predominate over residues 1 to 26 (MPKMKTKSGLKKRIKITATGKVKRGN). Residues 1–62 (MPKMKTKSGL…SDFKRYKELI (62 aa)) are disordered. Positions 53 to 62 (SDFKRYKELI) are enriched in basic and acidic residues.

This sequence belongs to the bacterial ribosomal protein bL35 family.

The protein is Large ribosomal subunit protein bL35 of Metamycoplasma arthritidis (strain 158L3-1) (Mycoplasma arthritidis).